A 357-amino-acid polypeptide reads, in one-letter code: Red-sensitive opsin-1 (357 aa).

The Extracellular portion of the chain corresponds to 1 to 49 (MAEHWGDAIYAARRKGDETTREAMFTYTNSNNTKDPFEGPNYHIAPRWV). Asn31 carries an N-linked (GlcNAc...) asparagine glycan. Residues 50–74 (YNVATVWMFFVVVASTFTNGLVLVA) form a helical membrane-spanning segment. At 75–86 (TAKFKKLRHPLN) the chain is on the cytoplasmic side. A helical transmembrane segment spans residues 87–112 (WILVNLAIADLGETLFASTISVINQF). At 113 to 126 (FGYFILGHPMCIFE) the chain is on the extracellular side. Cys123 and Cys200 form a disulfide bridge. Residues 127–146 (GYTVSVCGIAALWSLTVISW) form a helical membrane-spanning segment. The Cytoplasmic segment spans residues 147–165 (ERWVVVCKPFGNVKFDAKW). A helical membrane pass occupies residues 166 to 189 (ASAGIIFSWVWAAAWCAPPIFGWS). The Extracellular portion of the chain corresponds to 190 to 215 (RYWPHGLKTSCGPDVFSGSEDPGVQS). Residues 216–243 (YMVVLMITCCIIPLAIIILCYIAVYLAI) traverse the membrane as a helical segment. The Cytoplasmic segment spans residues 244–265 (HAVAQQQKDSESTQKAEKEVSR). Residues 266 to 289 (MVVVMIFAYCFCWGPYTFFACFAA) form a helical membrane-spanning segment. Topologically, residues 290–297 (ANPGYAFH) are extracellular. Residues 298 to 322 (PLAAAMPAYFAKSATIYNPVIYVFM) traverse the membrane as a helical segment. N6-(retinylidene)lysine is present on Lys309. Residues 323–357 (NRQFRVCIMQLFGKKVDDGSEVSTSKTEVSSVAPA) are Cytoplasmic-facing.

It belongs to the G-protein coupled receptor 1 family. Opsin subfamily. In terms of processing, phosphorylated on some or all of the serine and threonine residues present in the C-terminal region. In terms of tissue distribution, retinal double cone principal photoreceptor cell outer segments.

It localises to the membrane. In terms of biological role, visual pigments are the light-absorbing molecules that mediate vision. They consist of an apoprotein, opsin, covalently linked to cis-retinal. This Danio rerio (Zebrafish) protein is Red-sensitive opsin-1 (opn1lw1).